Consider the following 137-residue polypeptide: Protein Flattop homolog (137 aa).

It belongs to the Flattop family.

Its subcellular location is the cytoplasm. The protein localises to the cytoskeleton. It is found in the flagellum axoneme. In terms of biological role, microtubule inner protein (MIP) part of the dynein-decorated doublet microtubules (DMTs) in cilia axoneme. Acts as a regulator of cilium basal body docking and positioning in mono- and multiciliated cells. Regulates basal body docking and cilia formation in multiciliated lung cells. Regulates kinocilium positioning and stereocilia bundle morphogenesis in the inner ear. The protein is Protein Flattop homolog of Chlamydomonas reinhardtii (Chlamydomonas smithii).